The chain runs to 267 residues: Tryptophan synthase alpha chain (267 aa).

Active-site proton acceptor residues include glutamate 47 and aspartate 58.

The protein belongs to the TrpA family. As to quaternary structure, tetramer of two alpha and two beta chains.

The enzyme catalyses (1S,2R)-1-C-(indol-3-yl)glycerol 3-phosphate + L-serine = D-glyceraldehyde 3-phosphate + L-tryptophan + H2O. The protein operates within amino-acid biosynthesis; L-tryptophan biosynthesis; L-tryptophan from chorismate: step 5/5. The alpha subunit is responsible for the aldol cleavage of indoleglycerol phosphate to indole and glyceraldehyde 3-phosphate. The protein is Tryptophan synthase alpha chain of Pelodictyon phaeoclathratiforme (strain DSM 5477 / BU-1).